Consider the following 125-residue polypeptide: Large ribosomal subunit protein bL21 (125 aa).

Belongs to the bacterial ribosomal protein bL21 family. Part of the 50S ribosomal subunit. Contacts protein L20.

Its function is as follows. This protein binds to 23S rRNA in the presence of protein L20. In Synechococcus sp. (strain CC9311), this protein is Large ribosomal subunit protein bL21.